A 518-amino-acid polypeptide reads, in one-letter code: MTAYKPYRHQLRRSLFASTIFPVFLVIIIGLVSFYAIYIWIEHRTIHQHVNESQSSLHHIEKQIQTFITQHNNSFQELDLTNHHDVTATKRELLKLIHQQPATLYYELSGPNQFITNNYEHLNTKNMYLFSTHQLKFKNSTYMLKIYMANTPRLSEIKKDSRQFALIVDRYDNILYANDDRFTIGEKYRPQQFGFMNESVKLNHANHRLIIYKDIHENIEDGITLLIVMAVVLVLLVIFGFISADNMAKRQTKDIETIIQKIYYAKNRHLGTYTPLKNNSELEEINNYIYDLFESNEQLIHSIEHTERRLRDIQLKEIERQFQPHFLFNTMQTIQYLITLSPKLAQTVVQQLSQMLRYSLRTNSHTVELNEELNYIEQYVAIQNIRFDDMIKLHIESSEEARHQTIGKMMLQPLIENAIKHGRDTESLDITIRLTLARQNLHVLVCDNGIGMSSSRLQYVRQSLNNDVFDTKHLGLNHLHNKAMIQYGSHARLHIFSKRNLGTLICYKIPLSRGNVDV.

2 helical membrane-spanning segments follow: residues 20–40 and 222–242; these read IFPVFLVIIIGLVSFYAIYIW and GITLLIVMAVVLVLLVIFGFI. The region spanning 297 to 513 is the Histidine kinase domain; the sequence is EQLIHSIEHT…LICYKIPLSR (217 aa). His325 is subject to Phosphohistidine; by autocatalysis.

Post-translationally, autophosphorylated.

The protein resides in the cell membrane. It carries out the reaction ATP + protein L-histidine = ADP + protein N-phospho-L-histidine.. Member of the two-component regulatory system HptS/HptR that regulates genes involved in hexose phosphate transport system in response to changes in extracellular phosphate sources. May act as a sensor protein kinase which is autophosphorylated at a histidine residue and transfers its phosphate group to the conserved aspartic acid residue in the regulatory domain of HptS. In turn, HptS antagonizes CcpA-dependent transcription of a subset of CcpA-regulated genes involved in antibiotic susceptibility. This is Sensor protein kinase HptS (hptS) from Staphylococcus aureus (strain bovine RF122 / ET3-1).